The primary structure comprises 904 residues: Protein translocase subunit SecA (904 aa).

Residues Gln89, 107 to 111 (GEGKT), and Asp502 contribute to the ATP site. Cys888, Cys890, Cys899, and His900 together coordinate Zn(2+).

The protein belongs to the SecA family. Monomer and homodimer. Part of the essential Sec protein translocation apparatus which comprises SecA, SecYEG and auxiliary proteins SecDF-YajC and YidC. Zn(2+) is required as a cofactor.

The protein localises to the cell inner membrane. It localises to the cytoplasm. The catalysed reaction is ATP + H2O + cellular proteinSide 1 = ADP + phosphate + cellular proteinSide 2.. In terms of biological role, part of the Sec protein translocase complex. Interacts with the SecYEG preprotein conducting channel. Has a central role in coupling the hydrolysis of ATP to the transfer of proteins into and across the cell membrane, serving both as a receptor for the preprotein-SecB complex and as an ATP-driven molecular motor driving the stepwise translocation of polypeptide chains across the membrane. The protein is Protein translocase subunit SecA of Roseobacter denitrificans (strain ATCC 33942 / OCh 114) (Erythrobacter sp. (strain OCh 114)).